A 101-amino-acid polypeptide reads, in one-letter code: Small ubiquitin-related modifier 1 (101 aa).

The residue at position 2 (Ser-2) is an N-acetylserine. Residue Ser-2 is modified to Phosphoserine. Residue Lys-7 forms a Glycyl lysine isopeptide (Lys-Gly) (interchain with G-Cter in SUMO1); alternate linkage. Lys-7 participates in a covalent cross-link: Glycyl lysine isopeptide (Lys-Gly) (interchain with G-Cter in SUMO2); alternate. Ser-9 carries the post-translational modification Phosphoserine. Residues Lys-16, Lys-17, and Lys-23 each participate in a glycyl lysine isopeptide (Lys-Gly) (interchain with G-Cter in SUMO2) cross-link. One can recognise a Ubiquitin-like domain in the interval 20–97 (EYIKLKVIGQ…IEVYHEQTGG (78 aa)). Lys-25 participates in a covalent cross-link: Glycyl lysine isopeptide (Lys-Gly) (interchain with G-Cter in SUMO1). Ser-32 carries the post-translational modification Phosphoserine. Glycyl lysine isopeptide (Lys-Gly) (interchain with G-Cter in SUMO2) cross-links involve residues Lys-37, Lys-39, Lys-45, and Lys-46. Gly-97 participates in a covalent cross-link: Glycyl lysine isopeptide (Gly-Lys) (interchain with K-? in acceptor proteins). Positions 98–101 (HSTV) are excised as a propeptide.

This sequence belongs to the ubiquitin family. SUMO subfamily. As to quaternary structure, covalently attached to KCNB1; UBE2I increases cross-linking with KCNB1 and PIAS1 decreases cross-links with KCNB1. Interacts with SAE2, RANBP2, PIAS1 and PIAS2. Interacts with PRKN. Covalently attached to a number of proteins such as IKFZ1, PML, RANGAP1, HIPK2, SP100, p53, p73-alpha, MDM2, JUN, DNMT3B and TDG. Also interacts with HIF1A, HIPK2, HIPK3, CHD3, EXOSC9, RAD51 and RAD52. Interacts with USP25 (via ts SIM domain); the interaction weakly sumoylates USP25. Interacts with SIMC1, CASP8AP2, RNF111 and SOBP (via SIM domains). Interacts with BHLHE40/DEC1. Interacts with RWDD3. Interacts with UBE2I/UBC9 and this interaction is enhanced in the presence of RWDD3. Interacts with MTA1. Interacts with SENP2. Interacts with HINT1. In terms of processing, cleavage of precursor form by SENP1, SENP2 is necessary for function. Post-translationally, polymeric SUMO1 chains undergo polyubiquitination by RNF4.

The protein resides in the nucleus membrane. Its subcellular location is the nucleus speckle. The protein localises to the cytoplasm. It localises to the nucleus. It is found in the PML body. The protein resides in the cell membrane. Its function is as follows. Ubiquitin-like protein that can be covalently attached to proteins as a monomer or a lysine-linked polymer. Covalent attachment via an isopeptide bond to its substrates requires prior activation by the E1 complex SAE1-SAE2 and linkage to the E2 enzyme UBE2I, and can be promoted by E3 ligases such as PIAS1-4, RANBP2 or CBX4. This post-translational modification on lysine residues of proteins plays a crucial role in a number of cellular processes such as nuclear transport, DNA replication and repair, mitosis and signal transduction. Involved for instance in targeting RANGAP1 to the nuclear pore complex protein RANBP2. Covalently attached to the voltage-gated potassium channel KCNB1; this modulates the gating characteristics of KCNB1. Polymeric SUMO1 chains are also susceptible to polyubiquitination which functions as a signal for proteasomal degradation of modified proteins. May also regulate a network of genes involved in palate development. Covalently attached to ZFHX3. The protein is Small ubiquitin-related modifier 1 (SUMO1) of Cervus nippon (Sika deer).